The primary structure comprises 174 residues: uncharacterized protein (174 aa).

Residues 137 to 174 are disordered; that stretch reads TNVTLGDDTPKSYDAPVSAIPPPATATTANATGVKPLE.

This is an uncharacterized protein from Acanthamoeba polyphaga (Amoeba).